Here is a 701-residue protein sequence, read N- to C-terminus: Polyribonucleotide nucleotidyltransferase (701 aa).

2 residues coordinate Mg(2+): Asp487 and Asp493. A KH domain is found at 554 to 613; sequence PTMLQMKIDSDKIRDVIGKGGATIRGICEETKASIDIEDDGSVKIYGETKEAAEAAKLRV. The S1 motif domain occupies 623 to 691; sequence GKIYVGKVER…NRGRIKLSIK (69 aa).

Belongs to the polyribonucleotide nucleotidyltransferase family. As to quaternary structure, component of the RNA degradosome, which is a multiprotein complex involved in RNA processing and mRNA degradation. Requires Mg(2+) as cofactor.

It localises to the cytoplasm. It catalyses the reaction RNA(n+1) + phosphate = RNA(n) + a ribonucleoside 5'-diphosphate. Its function is as follows. Involved in mRNA degradation. Catalyzes the phosphorolysis of single-stranded polyribonucleotides processively in the 3'- to 5'-direction. This is Polyribonucleotide nucleotidyltransferase from Pseudomonas aeruginosa (strain LESB58).